Here is a 192-residue protein sequence, read N- to C-terminus: Large ribosomal subunit protein uL6 (192 aa).

It belongs to the universal ribosomal protein uL6 family. Part of the 50S ribosomal subunit.

In terms of biological role, this protein binds to the 23S rRNA, and is important in its secondary structure. It is located near the subunit interface in the base of the L7/L12 stalk, and near the tRNA binding site of the peptidyltransferase center. The protein is Large ribosomal subunit protein uL6 of Nanoarchaeum equitans (strain Kin4-M).